Here is a 468-residue protein sequence, read N- to C-terminus: Cyclin-dependent kinase 14 (468 aa).

3 positions are modified to phosphoserine: Ser-24, Ser-77, and Ser-94. Residues 103–132 are disordered; that stretch reads KTSSAGKESPKVRRHSSPSSPTSPKFGKAD. Position 133 is a phosphoserine (Ser-133). The Protein kinase domain occupies 134-418; that stretch reads YEKLEKLGEG…AQAALSHEYF (285 aa). ATP is bound by residues 140–148 and Lys-163; that span reads LGEGSYATV. The Proton acceptor role is filled by Asp-255. The segment at 448-468 is disordered; sequence ESMRAFGKNNSYGKSLSNSKH. Residues 455–468 are compositionally biased toward polar residues; that stretch reads KNNSYGKSLSNSKH.

The protein belongs to the protein kinase superfamily. CMGC Ser/Thr protein kinase family. CDC2/CDKX subfamily. Found in a complex with LRP6, CCNY and CAPRIN2 during G2/M stage; CAPRIN2 functions as a scaffold for the complex by binding to CCNY via its N terminus and to CDK14 via its C terminus. Interacts with CCNY; CCNY mediates its recruitment to the plasma membrane and promotes phosphorylation of LRP6. Interacts with CCDN3 and CDKN1A. Interacts with SEPT8. Interacts with 14-3-3 proteina YWHAB, YWHAE, YWHAH and YWHAQ.

It localises to the cell membrane. It is found in the cytoplasm. The protein localises to the nucleus. The enzyme catalyses L-seryl-[protein] + ATP = O-phospho-L-seryl-[protein] + ADP + H(+). The catalysed reaction is L-threonyl-[protein] + ATP = O-phospho-L-threonyl-[protein] + ADP + H(+). Serine/threonine-protein kinase activity is promoted by associated cyclins CCDN3 and CCNY and repressed by CDKN1A. Functionally, serine/threonine-protein kinase involved in the control of the eukaryotic cell cycle, whose activity is controlled by an associated cyclin. Acts as a cell-cycle regulator of Wnt signaling pathway during G2/M phase by mediating the phosphorylation of LRP6 at 'Ser-1490', leading to the activation of the Wnt signaling pathway. Acts as a regulator of cell cycle progression and cell proliferation via its interaction with CCDN3. Phosphorylates RB1 in vitro, however the relevance of such result remains to be confirmed in vivo. May also play a role in meiosis, neuron differentiation and may indirectly act as a negative regulator of insulin-responsive glucose transport. The sequence is that of Cyclin-dependent kinase 14 (CDK14) from Dasypus novemcinctus (Nine-banded armadillo).